Reading from the N-terminus, the 289-residue chain is Release factor glutamine methyltransferase (289 aa).

Residues 122–126, Asp-145, Trp-174, and Asn-189 each bind S-adenosyl-L-methionine; that span reads GVGSG. 189–192 is a substrate binding site; the sequence is NPPY.

This sequence belongs to the protein N5-glutamine methyltransferase family. PrmC subfamily.

The enzyme catalyses L-glutaminyl-[peptide chain release factor] + S-adenosyl-L-methionine = N(5)-methyl-L-glutaminyl-[peptide chain release factor] + S-adenosyl-L-homocysteine + H(+). Its function is as follows. Methylates the class 1 translation termination release factors RF1/PrfA and RF2/PrfB on the glutamine residue of the universally conserved GGQ motif. This Caulobacter vibrioides (strain ATCC 19089 / CIP 103742 / CB 15) (Caulobacter crescentus) protein is Release factor glutamine methyltransferase.